The chain runs to 275 residues: MSRPEELAPPEIFYNDSEAHKYTGSTRVQHIQAKMTLRALELLNLQPCSFILDIGCGSGLSGEILTQEGDHVWCGLDISPSMLATGLSRELEGDLMLQDMGTGIPFRAGSFDAAISISAIQWLCNADTSYNDPKQRLMRFFNTLYAALKKGGKFVAQFYPKNDDQVDDILQSAKVAGFSGGLVVDDPESKKNKKYYLVLSSGAPPQGEEQVNLDGVTMDEENVNLKKQLRQRLKGGKDKESAKSFILRKKELMKRRGRKVAKDSKFTGRKRRHRF.

The segment at arginine 256–phenylalanine 275 is disordered. A Nuclear localization signal motif is present at residues glycine 257–serine 264.

Belongs to the class I-like SAM-binding methyltransferase superfamily. BUD23/WBSCR22 family. In terms of assembly, interacts with TRM112. Interacts with ECM16.

It is found in the cytoplasm. The protein resides in the nucleus. The catalysed reaction is guanosine(1575) in yeast 18S rRNA + S-adenosyl-L-methionine = N(7)-methylguanosine(1575) in yeast 18S rRNA + S-adenosyl-L-homocysteine. In terms of biological role, S-adenosyl-L-methionine-dependent methyltransferase that specifically methylates the N(7) position of guanine 1575 (m7G1575) in 18S rRNA. Requires the methyltransferase adapter protein TRM112 for full rRNA methyltransferase activity. Important for biogenesis end export of the 40S ribosomal subunit independent on its methyltransferase activity. Required for efficient cleavage of the primary 35S precursor rRNA at site A2. Involved in positioning the proximal bud pole signal. This is 18S rRNA (guanine(1575)-N(7))-methyltransferase (BUD23) from Saccharomyces cerevisiae (strain ATCC 204508 / S288c) (Baker's yeast).